We begin with the raw amino-acid sequence, 3101 residues long: Probable polyketide synthase 32 (3101 aa).

The 439-residue stretch at 27–465 (SGDVAVIGIG…GSNVCLILSE (439 aa)) folds into the Ketosynthase family 3 (KS3) domain. Residues Cys-199, His-338, and His-388 each act as for beta-ketoacyl synthase activity in the active site. Positions 664–697 (GVSADIIIGHSLGEVSSAYCSGMIDFETLCYLTY) are acyl/malonyl transferase. The For acyl/malonyl transferase activity role is filled by Ser-674. The tract at residues 965–1087 (GPSINNLGNN…GNFSLTKHNS (123 aa)) is N-terminal hotdog fold. The PKS/mFAS DH domain maps to 965–1287 (GPSINNLGNN…CTLVSLPNPE (323 aa)). The active-site Proton acceptor; for dehydratase activity is the His-999. Residues 1104–1287 (NFTSISKQDL…CTLVSLPNPE (184 aa)) are C-terminal hotdog fold. Asp-1176 (proton donor; for dehydratase activity) is an active-site residue. Residues 1209 to 1236 (KNGNNNDDDEESNNNNNNNNNNNNNNNN) form a disordered region. Over residues 1221–1236 (NNNNNNNNNNNNNNNN) the composition is skewed to low complexity. The 78-residue stretch at 2550–2627 (DNNEIIRSTI…QSIEIIKSAN (78 aa)) folds into the Carrier domain. An O-(pantetheine 4'-phosphoryl)serine modification is found at Ser-2587. A disordered region spans residues 2627–2648 (NNKNNKNNNNNNNNKTNKNNNN).

The cofactor is pantetheine 4'-phosphate.

Functionally, probable polyketide synthase. The polypeptide is Probable polyketide synthase 32 (pks32) (Dictyostelium discoideum (Social amoeba)).